The primary structure comprises 1116 residues: Protein STICHEL-like 1 (1116 aa).

2 disordered regions span residues R95–T138 and K225–P244. Acidic residues predominate over residues N115–V124. 2 consecutive short sequence motifs (PEST) follow at residues R257–R282 and K402–Q422. G463–T470 provides a ligand contact to ATP. 4 residues coordinate Zn(2+): C482, C492, C495, and C498. Residues E726–T760 are a coiled coil. Residues P777–S798 are disordered. The segment covering S778–R793 has biased composition (polar residues).

This sequence belongs to the DnaX/STICHEL family.

The polypeptide is Protein STICHEL-like 1 (Arabidopsis thaliana (Mouse-ear cress)).